Consider the following 350-residue polypeptide: Protein-glutamate methylesterase/protein-glutamine glutaminase 1 (350 aa).

One can recognise a Response regulatory domain in the interval 3–121 (KVLIVEDSPV…RDYDIRARDL (119 aa)). Position 54 is a 4-aspartylphosphate (Asp-54). Residues 148-342 (PASGEPDIGK…PPEKIARVLV (195 aa)) form the CheB-type methylesterase domain. Catalysis depends on residues Ser-170, His-197, and Asp-290.

The protein belongs to the CheB family. Post-translationally, phosphorylated by CheA. Phosphorylation of the N-terminal regulatory domain activates the methylesterase activity.

It localises to the cytoplasm. It carries out the reaction [protein]-L-glutamate 5-O-methyl ester + H2O = L-glutamyl-[protein] + methanol + H(+). It catalyses the reaction L-glutaminyl-[protein] + H2O = L-glutamyl-[protein] + NH4(+). In terms of biological role, involved in chemotaxis. Part of a chemotaxis signal transduction system that modulates chemotaxis in response to various stimuli. Catalyzes the demethylation of specific methylglutamate residues introduced into the chemoreceptors (methyl-accepting chemotaxis proteins or MCP) by CheR. Also mediates the irreversible deamidation of specific glutamine residues to glutamic acid. The chain is Protein-glutamate methylesterase/protein-glutamine glutaminase 1 from Syntrophus aciditrophicus (strain SB).